Reading from the N-terminus, the 765-residue chain is MIRLIRGNNVPSLVFKRSLFVPSNSLTNKRKRRIPPLKPRSSNKEGGDIKQSRITDRNQTSRTVGVSEKLPTQIKKELKDLRSFTKVIAQHLKPEQENDSLTSAEKPDTSQLPPIDIEEATDDIFGQISGTKKSSVEVAPPPPPPGLDIPDEIKERLGLLSELLVPEKSSNSKLPEKQVENNWKLLLSQLDQAGGLSGLSKRTISKFFSKIPPKNLKGLIPIIENMYNKAEMSIPHPIYYMFVRSLTLGDKISDTQMQLIDKYFQEISKQTDLKIDHYETMILAQVKNNHMEKIDGILALMKTKNIEISKMIYTSIVRGYIFYQKDHQKALETFDSMKFLSQKTQPDEKVYTDVIVSCIMHREIEKALDLYYELKDKGMNVNQNLLSTLAKGCSRSKQFKTQAWNFLFQIYDHGWVPNLQTYEHMLYIAARDGDVELTRALFYKMLQTNSVTVRAFRYLILSYSKYVPPHKRKERYLILLNHKGQLFRENILQDVDFSKPIHGFPFLPSSHIPDSKFVLAESSAIWAHTVMNNPSFLRQQTLVASYVSIALELDDFTEFKNRFNSASYLNKDGIPKVREIEIIEPQQDEPTETVTATEQQNTSSNTSVIRSPILNQLQQNINDNQFKAPRDSYLYNLAIKAAGKFKNYGFAQEILHERGQFRKSNSFKSLSPKQQHQDDFQFAGYLVECWTNMNLLEDAYAVVLSSIDRFPWSWRELGVLNNAAMKLGSLELAEAVRKVAQVTQVKHHGKIKRQDFKTYVMKRGY.

Residues 1 to 63 (MIRLIRGNNV…ITDRNQTSRT (63 aa)) constitute a mitochondrion transit peptide. Disordered stretches follow at residues 26 to 67 (LTNK…VGVS) and 92 to 114 (LKPEQENDSLTSAEKPDTSQLPP). The span at 42 to 56 (SNKEGGDIKQSRITD) shows a compositional bias: basic and acidic residues. PPR repeat units lie at residues 274-308 (KIDHYETMILAQVKNNHMEKIDGILALMKTKNIEI), 309-344 (SKMIYTSIVRGYIFYQKDHQKALETFDSMKFLSQKT), 347-381 (DEKVYTDVIVSCIMHREIEKALDLYYELKDKGMNV), 382-417 (NQNLLSTLAKGCSRSKQFKTQAWNFLFQIYDHGWVP), and 418-452 (NLQTYEHMLYIAARDGDVELTRALFYKMLQTNSVT). A disordered region spans residues 585–609 (PQQDEPTETVTATEQQNTSSNTSVI). Residues 592-609 (ETVTATEQQNTSSNTSVI) are compositionally biased toward polar residues. Residues 631–661 (DSYLYNLAIKAAGKFKNYGFAQEILHERGQF) form a PPR 6 repeat.

Belongs to the CCM1 family. Binds to mitochondrial small subunit 15S rRNA.

Its subcellular location is the mitochondrion. Its function is as follows. Regulates mitochondrial small subunit maturation by controlling 15S rRNA 5'-end processing. Localizes to the 5' precursor of the 15S rRNA in a position that is subsequently occupied by mS47 in the mature yeast mtSSU. Uses structure and sequence-specific RNA recognition, binding to a single-stranded region of the precursor and specifically recognizing bases -6 to -1. The exchange of Ccm1 for mS47 is coupled to the irreversible removal of precursor rRNA that is accompanied by conformational changes of the mitoribosomal proteins uS5m and mS26. These conformational changes signal completion of 5'-end rRNA processing through protection of the mature 5'-end of the 15S rRNA and stabilization of mS47. The removal of the 5' precursor together with the dissociation of Ccm1 may be catalyzed by the 5'-3' exoribonuclease Pet127. Involved in the specific removal of group I introns in mitochondrial encoded transcripts. This chain is Mitochondrial 15S rRNA processing factor CCM1 (CCM1), found in Candida dubliniensis (strain CD36 / ATCC MYA-646 / CBS 7987 / NCPF 3949 / NRRL Y-17841) (Yeast).